The chain runs to 494 residues: Glycerol kinase (494 aa).

Residue Thr-13 coordinates ADP. The ATP site is built by Thr-13, Thr-14, and Ser-15. Thr-13 lines the sn-glycerol 3-phosphate pocket. Position 17 (Arg-17) interacts with ADP. 4 residues coordinate sn-glycerol 3-phosphate: Arg-83, Glu-84, Tyr-135, and Asp-244. 5 residues coordinate glycerol: Arg-83, Glu-84, Tyr-135, Asp-244, and Gln-245. ADP is bound by residues Thr-266 and Gly-309. Residues Thr-266, Gly-309, Gln-313, and Gly-410 each contribute to the ATP site. Positions 410 and 414 each coordinate ADP.

Belongs to the FGGY kinase family.

It carries out the reaction glycerol + ATP = sn-glycerol 3-phosphate + ADP + H(+). It participates in polyol metabolism; glycerol degradation via glycerol kinase pathway; sn-glycerol 3-phosphate from glycerol: step 1/1. Its activity is regulated as follows. Inhibited by fructose 1,6-bisphosphate (FBP). In terms of biological role, key enzyme in the regulation of glycerol uptake and metabolism. Catalyzes the phosphorylation of glycerol to yield sn-glycerol 3-phosphate. This is Glycerol kinase from Shewanella baltica (strain OS195).